Here is a 428-residue protein sequence, read N- to C-terminus: MQELHLLWWALLLGLAQACPEPCDCGEKYGFQIADCAYRDLESVPPGFPANVTTLSLSANRLPGLPEGAFREVPLLQSLWLAHNEIRTVAAGALASLSHLKSLDLSHNLISDFAWSDLHNLSALQLLKMDSNELTFIPRDAFRSLRALRSLQLNHNRLHTLAEGTFTPLTALSHLQINENPFDCTCGIVWLKTWALTTAVSIPEQDNIACTSPHVLKGTPLSRLPPLPCSAPSVQLSYQPSQDGAELRPGFVLALHCDVDGQPAPQLHWHIQIPSGIVEITSPNVGTDGRALPGTPVASSQPRFQAFANGSLLIPDFGKLEEGTYSCLATNELGSAESSVDVALATPGEGGEDTLGRRFHGKAVEGKGCYTVDNEVQPSGPEDNVVIIYLSRAGNPEAAVAEGVPGQLPPGLLLLGQSLLLFFFLTSF.

The N-terminal stretch at 1-18 is a signal peptide; the sequence is MQELHLLWWALLLGLAQA. Residues 19–50 enclose the LRRNT domain; the sequence is CPEPCDCGEKYGFQIADCAYRDLESVPPGFPA. N-linked (GlcNAc...) asparagine glycosylation occurs at N51. 5 LRR repeats span residues 51–72, 75–96, 99–122, 123–144, and 147–168; these read NVTT…AFRE, LLQS…ALAS, HLKS…HNLS, ALQL…AFRS, and ALRS…TFTP. The LRRCT domain maps to 180-231; the sequence is NPFDCTCGIVWLKTWALTTAVSIPEQDNIACTSPHVLKGTPLSRLPPLPCSA. An Ig-like domain is found at 232–343; that stretch reads PSVQLSYQPS…GSAESSVDVA (112 aa). C257 and C327 are disulfide-bonded. N-linked (GlcNAc...) asparagine glycosylation is present at N309.

Expressed in various tissues including retina, heart, skeletal muscle, prostate, ovary, small intestine, thyroid, adrenal cortex, testis, stomach and spinal cord.

It is found in the secreted. In Homo sapiens (Human), this protein is Immunoglobulin superfamily containing leucine-rich repeat protein (ISLR).